An 873-amino-acid chain; its full sequence is Valine--tRNA ligase (873 aa).

The 'HIGH' region motif lies at 46–56 (PNVTGKLHIGH). The 'KMSKS' region motif lies at 525–529 (KMSKS). Lys-528 contributes to the ATP binding site. A coiled-coil region spans residues 804–873 (NDDFIDKEKM…ELIQDKLNKM (70 aa)).

Belongs to the class-I aminoacyl-tRNA synthetase family. ValS type 1 subfamily. As to quaternary structure, monomer.

Its subcellular location is the cytoplasm. The catalysed reaction is tRNA(Val) + L-valine + ATP = L-valyl-tRNA(Val) + AMP + diphosphate. In terms of biological role, catalyzes the attachment of valine to tRNA(Val). As ValRS can inadvertently accommodate and process structurally similar amino acids such as threonine, to avoid such errors, it has a 'posttransfer' editing activity that hydrolyzes mischarged Thr-tRNA(Val) in a tRNA-dependent manner. The chain is Valine--tRNA ligase from Mesoplasma florum (strain ATCC 33453 / NBRC 100688 / NCTC 11704 / L1) (Acholeplasma florum).